The following is a 206-amino-acid chain: Large ribosomal subunit protein uL4 (206 aa).

Positions 65–85 (KQKGSGGARHGDRKAPQFRGG) are disordered.

This sequence belongs to the universal ribosomal protein uL4 family. In terms of assembly, part of the 50S ribosomal subunit.

Functionally, one of the primary rRNA binding proteins, this protein initially binds near the 5'-end of the 23S rRNA. It is important during the early stages of 50S assembly. It makes multiple contacts with different domains of the 23S rRNA in the assembled 50S subunit and ribosome. In terms of biological role, forms part of the polypeptide exit tunnel. This Parvibaculum lavamentivorans (strain DS-1 / DSM 13023 / NCIMB 13966) protein is Large ribosomal subunit protein uL4.